Reading from the N-terminus, the 215-residue chain is Pentapeptide repeat protein QnrB4 (215 aa).

Pentapeptide repeat domains lie at 25–104 (TFFN…SFMN) and 117–191 (ITNT…RGVD).

This sequence belongs to the pentapeptide repeat protein family.

Probably plays a role in resistance to quinolone antibiotics. Only inhibits ATP-dependent DNA supercoiling by E.coli gyrase at high concentration (30 uM). Protects E.coli gyrase supercoiling activity from inhibition by fluoroquinolones (ciprofloxacin) at 0.1 uM, does not protect M.tuberculosis gyrase activity. This is Pentapeptide repeat protein QnrB4 from Escherichia coli.